Consider the following 911-residue polypeptide: MALQGNLFGDAEPASSAPSKGQKRQDEPDQLDDHELTQDAKQRPRQRQGQQEHSEPSASSQSEEAHSEASTPAGKDQDNSDDDLPPWSHHSQVTPEQLTPMLRHYVELKAAHPERILLYRLGDFFECFFEDAIHLSRLLELTLTGKEAGKQIGRVPMAGIPHHAAERYCSELIRRGLSVALCDQLEAAPASGSAKGTLLRRDITRVLTPGTVLEEGLLSARRNNWLAAVVVEPAQGRQPFRWGLACADVSTGEFLVREQDNSAALHQELARLDPAELIHHNQNSVAPSWCPERLQRCDIGNTPFSQPEAEALLLERFRLQTLDGLGLQNVPLAMRAAGGLIAYLGETCPLDDNGITPPPLERPITCFPGDALVLDAQTRRNLELIATQRDNQFQGSLLWAIDRTLTAMGARCLRRWIEAPLMDPSIIRSRQASVSQLVSKRPLRQALRRLLRPMGDLERLAGRAGAGHAGARDLVAIADGLERLPQLANLITSQLDGGPSWLSDVLEPDPALAVIGASIRHQLMDNPPLSLSEGGLIHDGVDPLLDGLRNQLDDQESWLAEQEQLERQSSNNSNLKLQYHRTFGYFLSVSRARSGAVPDHWIRRQTLANEERFITPDLKAREGQIFQMRARAAQREYELFCELRGQIGEHAEAIRRSARAIAGLDALTSLAEAAATGGWCAPEITADRSMVIEQGRHPVVEQLLVEDAFTPNDSNLGTGIDLVVLTGPNASGKSCYLRQIGLIQLLAQIGSWVPAQAARIGIADRIFTRVGAVDDLAAGQSTFMVEMAETANILHHASERSLVLLDEIGRGTATFDGLSIAWAVSEHLAGDLQARTVFATHYHELNALAGERSNVANCQVLVEETGSDLVFLHRVAAGGASRSYGIEAARLAGVPASVVQRARQVLDQLAT.

The disordered stretch occupies residues 1 to 95 (MALQGNLFGD…PWSHHSQVTP (95 aa)). The segment covering 23 to 42 (KRQDEPDQLDDHELTQDAKQ) has biased composition (basic and acidic residues). 727 to 734 (GPNASGKS) lines the ATP pocket.

The protein belongs to the DNA mismatch repair MutS family.

Its function is as follows. This protein is involved in the repair of mismatches in DNA. It is possible that it carries out the mismatch recognition step. This protein has a weak ATPase activity. The polypeptide is DNA mismatch repair protein MutS (Synechococcus sp. (strain CC9311)).